Reading from the N-terminus, the 267-residue chain is Phosphate import ATP-binding protein PstB (267 aa).

The ABC transporter domain maps to Val-21–Ile-262. ATP is bound at residue Gly-53–Ser-60.

It belongs to the ABC transporter superfamily. Phosphate importer (TC 3.A.1.7) family. In terms of assembly, the complex is composed of two ATP-binding proteins (PstB), two transmembrane proteins (PstC and PstA) and a solute-binding protein (PstS).

The protein resides in the cell inner membrane. It catalyses the reaction phosphate(out) + ATP + H2O = ADP + 2 phosphate(in) + H(+). Functionally, part of the ABC transporter complex PstSACB involved in phosphate import. Responsible for energy coupling to the transport system. The polypeptide is Phosphate import ATP-binding protein PstB (Xanthomonas oryzae pv. oryzae (strain MAFF 311018)).